We begin with the raw amino-acid sequence, 1047 residues long: Ubiquitin carboxyl-terminal hydrolase 48 (1047 aa).

Positions 89–416 (VGLTNLGATC…NAYMLVYKQQ (328 aa)) constitute a USP domain. Cysteine 98 acts as the Nucleophile in catalysis. Residue histidine 348 is the Proton acceptor of the active site. 3 DUSP domains span residues 457 to 551 (QSVD…RSSL), 567 to 697 (NQLN…DHDP), and 717 to 830 (MMAN…RIHD). The disordered stretch occupies residues 609–647 (LEEDEEETKHNNSKINGEKSSPGTKADGVKGDSEDGDGE). Residues 621–631 (SKINGEKSSPG) show a composition bias toward polar residues. Positions 635-647 (DGVKGDSEDGDGE) are enriched in basic and acidic residues. The segment at 887–928 (PEFSVSGSDVEDEKEEPKLDGEKDPDFSQTEGGAKRQKLNDT) is disordered. Residues 901–912 (EEPKLDGEKDPD) are compositionally biased toward basic and acidic residues. A Ubiquitin-like domain is found at 961-1012 (VSANQTLKDLKIQIMHAFSVAPFDQNLSIDGRCLKDDSATLGSLGVIPESII).

Belongs to the peptidase C19 family.

The protein resides in the cytoplasm. The protein localises to the nucleus. The catalysed reaction is Thiol-dependent hydrolysis of ester, thioester, amide, peptide and isopeptide bonds formed by the C-terminal Gly of ubiquitin (a 76-residue protein attached to proteins as an intracellular targeting signal).. Functionally, recognizes and hydrolyzes the peptide bond at the C-terminal Gly of ubiquitin. Involved in the processing of poly-ubiquitin precursors as well as that of ubiquitinated proteins. This is Ubiquitin carboxyl-terminal hydrolase 48 (usp48) from Danio rerio (Zebrafish).